Reading from the N-terminus, the 612-residue chain is Elongation factor 4 (612 aa).

Positions 11 to 193 (KHIRNFSIIA…KLVTDVPAPT (183 aa)) constitute a tr-type G domain. GTP is bound by residues 23 to 28 (DHGKST) and 140 to 143 (NKID).

This sequence belongs to the TRAFAC class translation factor GTPase superfamily. Classic translation factor GTPase family. LepA subfamily.

The protein resides in the cell membrane. It catalyses the reaction GTP + H2O = GDP + phosphate + H(+). Required for accurate and efficient protein synthesis under certain stress conditions. May act as a fidelity factor of the translation reaction, by catalyzing a one-codon backward translocation of tRNAs on improperly translocated ribosomes. Back-translocation proceeds from a post-translocation (POST) complex to a pre-translocation (PRE) complex, thus giving elongation factor G a second chance to translocate the tRNAs correctly. Binds to ribosomes in a GTP-dependent manner. This is Elongation factor 4 from Latilactobacillus sakei subsp. sakei (strain 23K) (Lactobacillus sakei subsp. sakei).